Here is a 582-residue protein sequence, read N- to C-terminus: External alternative NAD(P)H-ubiquinone oxidoreductase B4, mitochondrial (582 aa).

A mitochondrion-targeting transit peptide spans 1-39 (MSFHSFYQRASSLFKAYPSTSKILLLSTFSGGGGVLVYS). Position 65–95 (65–95 (KVVVLGSGWSGYSFLSYLNNPNYDVQVVSPR)) interacts with FAD. NAD(+) is bound at residue 227–263 (LHFVVVGGGPTGVEFSAELHDFLVQDVAKIYPKVQEF). Positions 384 to 419 (RVMEDIAAIFNKADKGNTGTLKKKDFNSVVKDICQR) constitute an EF-hand domain. D397, T401, T403, and D408 together coordinate Ca(2+). The short motif at 573-582 (FVFGRDSSSI) is the Microbody targeting signal element.

It belongs to the NADH dehydrogenase family. It depends on FAD as a cofactor. As to expression, expressed in seedlings, roots, cotyledons, stems, buds and flowers and, to a lower extent, in stems and leaves.

The protein resides in the mitochondrion inner membrane. The protein localises to the peroxisome. It catalyses the reaction a quinone + NADH + H(+) = a quinol + NAD(+). The enzyme catalyses a ubiquinone + NADH + H(+) = a ubiquinol + NAD(+). No effect of calcium ions on activity. Its function is as follows. Alternative NADH-ubiquinone oxidoreductase which catalyzes the oxidation of mitochondrial NADH does not translocate protons across the inner mitochondrial membrane. NAD(P)H dehydrogenase; more efficient on NADH. In Arabidopsis thaliana (Mouse-ear cress), this protein is External alternative NAD(P)H-ubiquinone oxidoreductase B4, mitochondrial (NDB4).